The sequence spans 96 residues: Interleukin-8 (96 aa).

The first 22 residues, Met1–Ala22, serve as a signal peptide directing secretion. Residue Arg27 is modified to Citrulline. Intrachain disulfides connect Cys34–Cys61 and Cys36–Cys78.

It belongs to the intercrine alpha (chemokine CxC) family. As to quaternary structure, homodimer. Interacts with TNFAIP6 (via Link domain); this interaction interferes with chemokine binding to glycosaminoglycans. Citrullination at Arg-27 prevents proteolysis, and dampens tissue inflammation, it also enhances leukocytosis, possibly through impaired chemokine clearance from the blood circulation.

It localises to the secreted. Chemotactic factor that mediates inflammatory response by attracting neutrophils, basophils, and T-cells to clear pathogens and protect the host from infection. Also plays an important role in neutrophil activation. Released in response to an inflammatory stimulus, exerts its effect by binding to the G-protein-coupled receptors CXCR1 and CXCR2, primarily found in neutrophils, monocytes and endothelial cells. G-protein heterotrimer (alpha, beta, gamma subunits) constitutively binds to CXCR1/CXCR2 receptor and activation by IL8 leads to beta and gamma subunits release from Galpha (GNAI2 in neutrophils) and activation of several downstream signaling pathways including PI3K and MAPK pathways. This is Interleukin-8 (CXCL8) from Dasypus novemcinctus (Nine-banded armadillo).